Consider the following 487-residue polypeptide: Glutamyl-tRNA(Gln) amidotransferase subunit A (487 aa).

Active-site charge relay system residues include Lys-80 and Ser-155. Ser-179 serves as the catalytic Acyl-ester intermediate.

The protein belongs to the amidase family. GatA subfamily. Heterotrimer of A, B and C subunits.

The catalysed reaction is L-glutamyl-tRNA(Gln) + L-glutamine + ATP + H2O = L-glutaminyl-tRNA(Gln) + L-glutamate + ADP + phosphate + H(+). Its function is as follows. Allows the formation of correctly charged Gln-tRNA(Gln) through the transamidation of misacylated Glu-tRNA(Gln) in organisms which lack glutaminyl-tRNA synthetase. The reaction takes place in the presence of glutamine and ATP through an activated gamma-phospho-Glu-tRNA(Gln). This chain is Glutamyl-tRNA(Gln) amidotransferase subunit A, found in Leptospira interrogans serogroup Icterohaemorrhagiae serovar copenhageni (strain Fiocruz L1-130).